Consider the following 55-residue polypeptide: Large ribosomal subunit protein bL32 (55 aa).

Positions 1–19 (MAVPKRRMSRANTHTRRSQ) are enriched in basic residues. Residues 1 to 21 (MAVPKRRMSRANTHTRRSQWK) are disordered.

Belongs to the bacterial ribosomal protein bL32 family.

The chain is Large ribosomal subunit protein bL32 from Corynebacterium kroppenstedtii (strain DSM 44385 / JCM 11950 / CIP 105744 / CCUG 35717).